Reading from the N-terminus, the 504-residue chain is Doublesex- and mab-3-related transcription factor A1 (504 aa).

The span at 1–13 shows a compositional bias: basic and acidic residues; that stretch reads MERSQCGSRDRGV. Residues 1 to 27 form a disordered region; it reads MERSQCGSRDRGVSGRPHLAPGLVVAA. Residues 97–144 constitute a DNA-binding region (DM); sequence CARCRNHGVVSALKGHKRFCRWRDCACAKCTLIAERQRVMAAQVALRR. 2 disordered regions span residues 170 to 192 and 266 to 307; these read GRAS…AAGA and SISE…NESE. Low complexity predominate over residues 293–306; that stretch reads RSLSSSDLESGNES. A DMA domain is found at 327-362; the sequence is RDPLDILTKIFPNYRRSRLEGILRFCKGDVVQAIEQ.

The protein belongs to the DMRT family. Expressed in liver, kidney, pancreas, prostate and weakly detected in testis and ovary.

Its subcellular location is the nucleus. This Homo sapiens (Human) protein is Doublesex- and mab-3-related transcription factor A1 (DMRTA1).